Reading from the N-terminus, the 317-residue chain is MYTKILGTGSYLPTQIRSNTDLANMVDTSDEWIIARTGIRERRIASANETVFSMGSSAAEQALHMAGISANKVGMIIVATTSSSHAFPSSACQIQRDLGIMDCVAFDLAAACAGFPYALSIVDQYIKNGVIEYALVIGSDVLSNTPAPDDRSTLILFGDGAGAVLVGCSEQPGILSTHLHADGSYSDLLTLPYYNRFNPTADIYLKMSGNEVFKIAVTKLAHLVDETMSINHLSSKEIDWLVPHQANLRIISATAKLLGMKMNKVIVTLDKHGNTSAASIPLALDEAVRDGRIKTDQLLLLEAFGGGLTWGSALLRF.

Catalysis depends on residues C112 and H244. The segment at 245 to 249 is ACP-binding; it reads QANLR. Residue N274 is part of the active site.

This sequence belongs to the thiolase-like superfamily. FabH family. Homodimer.

It localises to the cytoplasm. The enzyme catalyses malonyl-[ACP] + acetyl-CoA + H(+) = 3-oxobutanoyl-[ACP] + CO2 + CoA. It participates in lipid metabolism; fatty acid biosynthesis. Functionally, catalyzes the condensation reaction of fatty acid synthesis by the addition to an acyl acceptor of two carbons from malonyl-ACP. Catalyzes the first condensation reaction which initiates fatty acid synthesis and may therefore play a role in governing the total rate of fatty acid production. Possesses both acetoacetyl-ACP synthase and acetyl transacylase activities. Its substrate specificity determines the biosynthesis of branched-chain and/or straight-chain of fatty acids. This chain is Beta-ketoacyl-[acyl-carrier-protein] synthase III, found in Baumannia cicadellinicola subsp. Homalodisca coagulata.